A 92-amino-acid polypeptide reads, in one-letter code: UPF0223 protein SPy_1248/M5005_Spy0958 (92 aa).

The protein belongs to the UPF0223 family.

In Streptococcus pyogenes serotype M1, this protein is UPF0223 protein SPy_1248/M5005_Spy0958.